Reading from the N-terminus, the 60-residue chain is Large ribosomal subunit protein bL32 (60 aa).

Belongs to the bacterial ribosomal protein bL32 family.

This Thermosipho africanus (strain TCF52B) protein is Large ribosomal subunit protein bL32.